Consider the following 353-residue polypeptide: UPF0283 membrane protein CKO_01392 (353 aa).

3 consecutive transmembrane segments (helical) span residues 70-90 (MVMG…VQWT), 99-119 (WVAL…VGSV), and 213-233 (ESTL…FIAW).

It belongs to the UPF0283 family.

The protein resides in the cell inner membrane. The sequence is that of UPF0283 membrane protein CKO_01392 from Citrobacter koseri (strain ATCC BAA-895 / CDC 4225-83 / SGSC4696).